The sequence spans 157 residues: Vitamin K-dependent protein C (157 aa).

A Peptidase S1 domain is found at glutamate 1–valine 157. Residue asparagine 17 is glycosylated (N-linked (GlcNAc...) asparagine). Aspartate 26 functions as the Charge relay system in the catalytic mechanism. N-linked (GlcNAc...) asparagine glycosylation occurs at asparagine 78. 2 disulfide bridges follow: cysteine 96–cysteine 110 and cysteine 121–cysteine 149. Catalysis depends on serine 125, which acts as the Charge relay system.

It belongs to the peptidase S1 family. In terms of tissue distribution, plasma; synthesized in the liver.

The protein localises to the secreted. It localises to the golgi apparatus. Its subcellular location is the endoplasmic reticulum. It carries out the reaction Degradation of blood coagulation factors Va and VIIIa.. Functionally, protein C is a vitamin K-dependent serine protease that regulates blood coagulation by inactivating factors Va and VIIIa in the presence of calcium ions and phospholipids. Exerts a protective effect on the endothelial cell barrier function. This Felis catus (Cat) protein is Vitamin K-dependent protein C (PROC).